The chain runs to 195 residues: Packaging protein 2 (195 aa).

Positions 1 to 124 are disordered; that stretch reads MAPKKKLQLP…QEQQQRQGYR (124 aa). Over residues 15-53 the composition is skewed to acidic residues; the sequence is TDEEEYWDSQAEEVLDEEEEMMEDWDSLDEASEAEEVSD. Residues 54-63 show a composition bias toward low complexity; that stretch reads ETPSPSVAFP.

This sequence belongs to the adenoviridae splicing factor family. Part of a genome packaging complex composed of packaging proteins 1, 2 and 3; this complex specifically binds to the packaging sequence on the left end of viral genomic DNA and performs packaging of the viral genome. Self-assembles into higher-order structures.

Its subcellular location is the host nucleus. Component of the packaging machinery which encapsidates the viral DNA into preformed capsids and transcriptional activator of the viral major late promoter (MLP). Binds, along with packaging proteins 1 and 3, to the specific packaging sequence on the left end of viral genomic DNA and plays an active role in packaging of the viral genome into preformed capsids. Specifically binds to the 5'-TTTG-3' nucleotides of the repeats making up the packaging sequence. Forms a transcription factor called DEF-A through cooperative binding with packaging protein 1. DEF-A binds to downstream elements of the major late promoter (MLP) and stimulates transcription from the MLP after initiation of viral DNA replication. Simultaneously suppresses early gene expression and is thus likely to participate in the early-late switch in the expression pattern of the late viral proteins. May as well enhance transcription from IVa2 and pIX promoters. The chain is Packaging protein 2 from Homo sapiens (Human).